The primary structure comprises 391 residues: DNA-directed RNA polymerase subunit Rpo1C (391 aa).

Belongs to the RNA polymerase beta' chain family. Part of the RNA polymerase complex.

Its subcellular location is the cytoplasm. The enzyme catalyses RNA(n) + a ribonucleoside 5'-triphosphate = RNA(n+1) + diphosphate. DNA-dependent RNA polymerase (RNAP) catalyzes the transcription of DNA into RNA using the four ribonucleoside triphosphates as substrates. Forms part of the jaw domain. The chain is DNA-directed RNA polymerase subunit Rpo1C from Thermococcus gammatolerans (strain DSM 15229 / JCM 11827 / EJ3).